A 481-amino-acid chain; its full sequence is Bestrophin homolog 17 (481 aa).

Topologically, residues 1 to 27 are cytoplasmic; that stretch reads MTVSYQLDVSSGNPLLFLRLLGRWRGS. The helical transmembrane segment at 28–48 threads the bilayer; sequence IWKSVVGDLFVWLLFYYAIYF. Topologically, residues 49-95 are extracellular; that stretch reads AYRYAFSKQLQTVFEEISIHTDDRMKYLPLTFMLGFFVTTVFERWRS. Residues 96–116 traverse the membrane as a helical segment; that stretch reads ALNVMPFIESVALSVAVLLPG. Topologically, residues 117 to 230 are cytoplasmic; sequence KGREDRLTRR…AMETLIKFDA (114 aa). The chain crosses the membrane as a helical span at residues 231 to 251; that stretch reads IPIPIAYPQVVFLAVRVYFAI. Topologically, residues 252 to 274 are extracellular; it reads CLVSRQFLISDMKSKTQMDWPVP. Residues 275–295 form a helical membrane-spanning segment; the sequence is IMTVLEFIFVIGWMKVAEVLL. Over 296–481 the chain is Cytoplasmic; sequence NPLGEDDDDF…SSEESVDKKG (186 aa). The tract at residues 427–481 is disordered; it reads AGMLNKSTQPDRPTMETVSEEHEPSHFYRGDRVHSSDSGLSKTQQSSEESVDKKG. The span at 445-461 shows a compositional bias: basic and acidic residues; it reads SEEHEPSHFYRGDRVHS. Residues 462 to 474 are compositionally biased toward polar residues; the sequence is SDSGLSKTQQSSE.

The protein belongs to the anion channel-forming bestrophin (TC 1.A.46) family. Calcium-sensitive chloride channel subfamily. Forms oligomers.

It localises to the cell membrane. In terms of biological role, forms chloride channels. This chain is Bestrophin homolog 17, found in Caenorhabditis elegans.